The primary structure comprises 249 residues: Small ribosomal subunit protein uS5 (249 aa).

Basic and acidic residues predominate over residues 1–14 (MSAEAPKRQFGDRR). A disordered region spans residues 1–29 (MSAEAPKRQFGDRRRGGRRGGRRDGEEKG). The S5 DRBM domain occupies 71 to 134 (LKDDVMKIRS…VIAKLSIIPI (64 aa)).

It belongs to the universal ribosomal protein uS5 family. Component of the small ribosomal subunit. Mature ribosomes consist of a small (40S) and a large (60S) subunit. The 40S subunit contains about 32 different proteins and 1 molecule of RNA (18S). The 60S subunit contains 45 different proteins and 3 molecules of RNA (25S, 5.8S and 5S).

Its subcellular location is the cytoplasm. In terms of biological role, component of the ribosome, a large ribonucleoprotein complex responsible for the synthesis of proteins in the cell. The small ribosomal subunit (SSU) binds messenger RNAs (mRNAs) and translates the encoded message by selecting cognate aminoacyl-transfer RNA (tRNA) molecules. The large subunit (LSU) contains the ribosomal catalytic site termed the peptidyl transferase center (PTC), which catalyzes the formation of peptide bonds, thereby polymerizing the amino acids delivered by tRNAs into a polypeptide chain. The nascent polypeptides leave the ribosome through a tunnel in the LSU and interact with protein factors that function in enzymatic processing, targeting, and the membrane insertion of nascent chains at the exit of the ribosomal tunnel. RPS2 is important for the assembly and function of the 40S ribosomal subunitand is nvolved in nucleolar processing of pre-18S ribosomal RNA and ribosome assembly. The polypeptide is Small ribosomal subunit protein uS5 (RPS21) (Candida albicans (strain SC5314 / ATCC MYA-2876) (Yeast)).